The sequence spans 296 residues: Polyamine aminopropyltransferase (296 aa).

Residues 5 to 238 (ELWYETLHAN…GIMTFAWATQ (234 aa)) enclose the PABS domain. S-methyl-5'-thioadenosine is bound at residue glutamine 33. Residues histidine 64 and aspartate 88 each coordinate spermidine. S-methyl-5'-thioadenosine contacts are provided by residues glutamate 108 and 140 to 141 (DG). Aspartate 158 (proton acceptor) is an active-site residue. A spermidine-binding site is contributed by 158–161 (DCTD). Proline 165 is a binding site for S-methyl-5'-thioadenosine.

This sequence belongs to the spermidine/spermine synthase family. As to quaternary structure, homodimer or homotetramer.

It is found in the cytoplasm. It catalyses the reaction S-adenosyl 3-(methylsulfanyl)propylamine + putrescine = S-methyl-5'-thioadenosine + spermidine + H(+). The protein operates within amine and polyamine biosynthesis; spermidine biosynthesis; spermidine from putrescine: step 1/1. Catalyzes the irreversible transfer of a propylamine group from the amino donor S-adenosylmethioninamine (decarboxy-AdoMet) to putrescine (1,4-diaminobutane) to yield spermidine. This chain is Polyamine aminopropyltransferase, found in Yersinia pestis bv. Antiqua (strain Antiqua).